The chain runs to 205 residues: Thymidine kinase (205 aa).

ATP-binding positions include 9-16 and 87-90; these read SAMNAGKS and DECQ. The Proton acceptor role is filled by E88. Zn(2+) contacts are provided by C145, C147, C182, and H185.

Belongs to the thymidine kinase family. Homotetramer.

It localises to the cytoplasm. The enzyme catalyses thymidine + ATP = dTMP + ADP + H(+). Its activity is regulated as follows. Allosteric enzyme which is feedback inhibited by dTTP and activated by a number of dNDP and dNTP. In terms of biological role, phosphorylates both thymidine and deoxyuridine. In Escherichia coli (strain K12), this protein is Thymidine kinase.